A 438-amino-acid chain; its full sequence is Adenosylhomocysteinase (438 aa).

Substrate-binding residues include Thr-64, Asp-139, and Glu-164. NAD(+) is bound at residue 165–167 (TTT). Substrate-binding residues include Lys-194 and Asp-198. NAD(+) is bound by residues Asn-199, 228 to 233 (GYGDVG), Glu-251, Asn-286, 307 to 309 (IGH), and Asn-352.

The protein belongs to the adenosylhomocysteinase family. The cofactor is NAD(+).

The protein resides in the cytoplasm. The catalysed reaction is S-adenosyl-L-homocysteine + H2O = L-homocysteine + adenosine. The protein operates within amino-acid biosynthesis; L-homocysteine biosynthesis; L-homocysteine from S-adenosyl-L-homocysteine: step 1/1. In terms of biological role, may play a key role in the regulation of the intracellular concentration of adenosylhomocysteine. This is Adenosylhomocysteinase from Coxiella burnetii (strain RSA 493 / Nine Mile phase I).